Here is a 188-residue protein sequence, read N- to C-terminus: Ion-translocating oxidoreductase complex subunit B (188 aa).

Positions 1 to 23 (MFTAIWVMVGLAIAIGLILGWSA) are hydrophobic. Residues 29–88 (EGNPLAEKIDAILPQTQCGQCGFPGCRPYAEAIAKGEADINQCPPGGEEGVKKLAELLGV) enclose the 4Fe-4S domain. Residues cysteine 46, cysteine 49, cysteine 54, cysteine 71, cysteine 113, cysteine 116, cysteine 119, cysteine 123, cysteine 143, cysteine 146, cysteine 149, and cysteine 153 each contribute to the [4Fe-4S] cluster site. 4Fe-4S ferredoxin-type domains follow at residues 104 to 133 (SVAF…GAAK) and 134 to 163 (QMHT…MVPI).

The protein belongs to the 4Fe4S bacterial-type ferredoxin family. RnfB subfamily. As to quaternary structure, the complex is composed of six subunits: RnfA, RnfB, RnfC, RnfD, RnfE and RnfG. It depends on [4Fe-4S] cluster as a cofactor.

It is found in the cell inner membrane. In terms of biological role, part of a membrane-bound complex that couples electron transfer with translocation of ions across the membrane. In Thiobacillus denitrificans (strain ATCC 25259 / T1), this protein is Ion-translocating oxidoreductase complex subunit B.